The sequence spans 331 residues: Anthranilate phosphoribosyltransferase (331 aa).

Residues glycine 79, 82-83, threonine 87, 89-92, 107-115, and serine 119 contribute to the 5-phospho-alpha-D-ribose 1-diphosphate site; these read GD, NVST, and KHGNYGVSS. Residue glycine 79 coordinates anthranilate. Mg(2+) is bound at residue serine 91. An anthranilate-binding site is contributed by asparagine 110. Arginine 165 is an anthranilate binding site. The Mg(2+) site is built by aspartate 223 and glutamate 224.

This sequence belongs to the anthranilate phosphoribosyltransferase family. As to quaternary structure, homodimer. The cofactor is Mg(2+).

The catalysed reaction is N-(5-phospho-beta-D-ribosyl)anthranilate + diphosphate = 5-phospho-alpha-D-ribose 1-diphosphate + anthranilate. Its pathway is amino-acid biosynthesis; L-tryptophan biosynthesis; L-tryptophan from chorismate: step 2/5. Catalyzes the transfer of the phosphoribosyl group of 5-phosphorylribose-1-pyrophosphate (PRPP) to anthranilate to yield N-(5'-phosphoribosyl)-anthranilate (PRA). The protein is Anthranilate phosphoribosyltransferase of Christiangramia forsetii (strain DSM 17595 / CGMCC 1.15422 / KT0803) (Gramella forsetii).